Reading from the N-terminus, the 870-residue chain is Lon protease (870 aa).

The 270-residue stretch at 1-270 (MPTNSYRFLV…KLYEHIHTFA (270 aa)) folds into the Lon N-terminal domain. 454–461 (GPPGTGKT) serves as a coordination point for ATP. Residues 691–870 (SPQIGTVTGL…YQQIYDFIFK (180 aa)) enclose the Lon proteolytic domain. Active-site residues include S777 and K820.

It belongs to the peptidase S16 family. As to quaternary structure, homohexamer. Organized in a ring with a central cavity.

The protein resides in the cytoplasm. The catalysed reaction is Hydrolysis of proteins in presence of ATP.. Its function is as follows. ATP-dependent serine protease that mediates the selective degradation of mutant and abnormal proteins as well as certain short-lived regulatory proteins. Required for cellular homeostasis and for survival from DNA damage and developmental changes induced by stress. Degrades polypeptides processively to yield small peptide fragments that are 5 to 10 amino acids long. Binds to DNA in a double-stranded, site-specific manner. This is Lon protease from Mesomycoplasma hyopneumoniae (strain 232) (Mycoplasma hyopneumoniae).